Here is a 309-residue protein sequence, read N- to C-terminus: Ribonuclease Z (309 aa).

Residues histidine 63, histidine 65, aspartate 67, histidine 68, histidine 145, aspartate 216, and histidine 274 each contribute to the Zn(2+) site. The active-site Proton acceptor is the aspartate 67.

Belongs to the RNase Z family. Homodimer. Zn(2+) is required as a cofactor.

The enzyme catalyses Endonucleolytic cleavage of RNA, removing extra 3' nucleotides from tRNA precursor, generating 3' termini of tRNAs. A 3'-hydroxy group is left at the tRNA terminus and a 5'-phosphoryl group is left at the trailer molecule.. Its function is as follows. Zinc phosphodiesterase, which displays some tRNA 3'-processing endonuclease activity. Probably involved in tRNA maturation, by removing a 3'-trailer from precursor tRNA. The chain is Ribonuclease Z from Streptococcus pneumoniae serotype 19F (strain G54).